Consider the following 621-residue polypeptide: Kelch-like protein 40 (621 aa).

Residues 33–98 form the BTB domain; it reads LDCVVRVGER…LYTSEIALDE (66 aa). Positions 133–239 constitute a BACK domain; the sequence is CLAVFRLGLL…PRAFLETRVE (107 aa). A disordered region spans residues 265 to 298; sequence LTTLRKKKKEKGEQTARAKEANQGTEDTKAEDDE. The segment covering 274–284 has biased composition (basic and acidic residues); that stretch reads EKGEQTARAKE. Kelch repeat units lie at residues 360–412, 413–462, 463–510, 512–557, and 559–613; these read QVFV…EALN, AIYV…SHMD, LVYV…VHDG, IFVA…SLAG, and LYAL…PVRL.

This sequence belongs to the KLHL40 family. Component of the BCR(KLHL40) E3 ubiquitin ligase complex, at least composed of CUL3, KLHL40 and RBX1. Interacts with LMOD3. As to expression, specifically expressed in skeletal muscles in embryonic, neonatal and adults. Expressed in various types of muscles, including extensor digitorum longus, gastrocnemius, soleus, diaphragm, masseter and heart (at protein level). Not detected in brain, liver and lung (at protein level).

It localises to the cytoplasm. The protein resides in the myofibril. The protein localises to the sarcomere. Its subcellular location is the a band. It is found in the i band. In terms of biological role, substrate-specific adapter of a BCR (BTB-CUL3-RBX1) E3 ubiquitin ligase complex that acts as a key regulator of skeletal muscle development. The BCR(KLHL40) complex acts by mediating ubiquitination and degradation of TFDP1, thereby regulating the activity of the E2F:DP transcription factor complex. Promotes stabilization of LMOD3 by acting as a negative regulator of LMOD3 ubiquitination; the molecular process by which it negatively regulates ubiquitination of LMOD3 is however unclear. The protein is Kelch-like protein 40 of Mus musculus (Mouse).